Consider the following 886-residue polypeptide: Translation initiation factor IF-2 (886 aa).

Disordered stretches follow at residues 1–25 (MSETKNPGDHTLSVSPTKTLSLKRP), 50–229 (RRAL…PAEE), and 253–272 (KGAEQKSRGRLTVASATGDE). The segment covering 50–60 (RRALGEPHVLR) has biased composition (basic and acidic residues). Low complexity predominate over residues 63 to 73 (APALDVVAPAP). The span at 74 to 83 (QAAPPAPTQQ) shows a compositional bias: pro residues. A compositionally biased stretch (low complexity) spans 84–106 (PQPRVASRPQPQQRSSSGVILRS). Positions 107-181 (LTEEEREARS…KRRSESEAKR (75 aa)) are enriched in basic and acidic residues. Residues 185–225 (GGEPAPAGANAAPRKAPALSAAPGSAAPSGQPGPAGAVGAR) show a composition bias toward low complexity. One can recognise a tr-type G domain in the interval 383–553 (SRPPVVTIMG…ALQAELLDLK (171 aa)). The segment at 392–399 (GHVDHGKT) is G1. Residue 392–399 (GHVDHGKT) coordinates GTP. Positions 417 to 421 (GITQH) are G2. The G3 stretch occupies residues 439–442 (DTPG). Residues 439 to 443 (DTPGH) and 493 to 496 (NKID) each bind GTP. The segment at 493–496 (NKID) is G4. Residues 529 to 531 (SAT) are G5.

Belongs to the TRAFAC class translation factor GTPase superfamily. Classic translation factor GTPase family. IF-2 subfamily.

The protein localises to the cytoplasm. In terms of biological role, one of the essential components for the initiation of protein synthesis. Protects formylmethionyl-tRNA from spontaneous hydrolysis and promotes its binding to the 30S ribosomal subunits. Also involved in the hydrolysis of GTP during the formation of the 70S ribosomal complex. This Methylocella silvestris (strain DSM 15510 / CIP 108128 / LMG 27833 / NCIMB 13906 / BL2) protein is Translation initiation factor IF-2.